Reading from the N-terminus, the 291-residue chain is Small ribosomal subunit biogenesis GTPase RsgA (291 aa).

One can recognise a CP-type G domain in the interval 63-221 (KNELKRPPVS…IADTPGFSAL (159 aa)). Residues 112–115 (TKKD) and 164–172 (GQSGVGKST) contribute to the GTP site. The Zn(2+) site is built by Cys245, Cys250, His252, and Cys258.

This sequence belongs to the TRAFAC class YlqF/YawG GTPase family. RsgA subfamily. In terms of assembly, monomer. Associates with 30S ribosomal subunit, binds 16S rRNA. The cofactor is Zn(2+).

It is found in the cytoplasm. Functionally, one of several proteins that assist in the late maturation steps of the functional core of the 30S ribosomal subunit. Helps release RbfA from mature subunits. May play a role in the assembly of ribosomal proteins into the subunit. Circularly permuted GTPase that catalyzes slow GTP hydrolysis, GTPase activity is stimulated by the 30S ribosomal subunit. This Staphylococcus aureus (strain Mu50 / ATCC 700699) protein is Small ribosomal subunit biogenesis GTPase RsgA.